Consider the following 301-residue polypeptide: Hydroxyquinol 1,2-dioxygenase (301 aa).

Residues Tyr-169, Tyr-202, His-226, and His-228 each coordinate Fe cation.

This sequence belongs to the intradiol ring-cleavage dioxygenase family. Fe(3+) serves as cofactor.

The catalysed reaction is benzene-1,2,4-triol + O2 = maleylacetate + 2 H(+). The protein operates within aromatic compound metabolism. Functionally, involved in resorcinol degradation. Catalyzes the conversion of hydroxyquinol to malelylacetate. Also shows weak activity with catechol, 3-methylcatechol and 4-methylcatechol, but cannot use 4-chlorocatechol, 4-nitrocatechol or protocatechuate. The sequence is that of Hydroxyquinol 1,2-dioxygenase from Corynebacterium glutamicum (strain ATCC 13032 / DSM 20300 / JCM 1318 / BCRC 11384 / CCUG 27702 / LMG 3730 / NBRC 12168 / NCIMB 10025 / NRRL B-2784 / 534).